A 634-amino-acid chain; its full sequence is 1-deoxy-D-xylulose-5-phosphate synthase (634 aa).

Thiamine diphosphate is bound by residues H74 and 115–117 (AHS). D146 contacts Mg(2+). Residues 147–148 (GA), N176, Y283, and E365 contribute to the thiamine diphosphate site. Residue N176 participates in Mg(2+) binding.

Belongs to the transketolase family. DXPS subfamily. In terms of assembly, homodimer. Mg(2+) serves as cofactor. Requires thiamine diphosphate as cofactor.

The catalysed reaction is D-glyceraldehyde 3-phosphate + pyruvate + H(+) = 1-deoxy-D-xylulose 5-phosphate + CO2. Its pathway is metabolic intermediate biosynthesis; 1-deoxy-D-xylulose 5-phosphate biosynthesis; 1-deoxy-D-xylulose 5-phosphate from D-glyceraldehyde 3-phosphate and pyruvate: step 1/1. Its function is as follows. Catalyzes the acyloin condensation reaction between C atoms 2 and 3 of pyruvate and glyceraldehyde 3-phosphate to yield 1-deoxy-D-xylulose-5-phosphate (DXP). The polypeptide is 1-deoxy-D-xylulose-5-phosphate synthase (Burkholderia pseudomallei (strain 668)).